We begin with the raw amino-acid sequence, 258 residues long: Small ribosomal subunit protein uS2 (258 aa).

Positions 226 to 258 are disordered; the sequence is QGVSNEEVAAEQNIDLDEKEKSEETEATEATEE.

The protein belongs to the universal ribosomal protein uS2 family.

The polypeptide is Small ribosomal subunit protein uS2 (Staphylococcus aureus (strain COL)).